The following is a 373-amino-acid chain: Putative glutamate--cysteine ligase 2-1 (373 aa).

The protein belongs to the glutamate--cysteine ligase type 2 family. YbdK subfamily.

It catalyses the reaction L-cysteine + L-glutamate + ATP = gamma-L-glutamyl-L-cysteine + ADP + phosphate + H(+). ATP-dependent carboxylate-amine ligase which exhibits weak glutamate--cysteine ligase activity. This Legionella pneumophila (strain Lens) protein is Putative glutamate--cysteine ligase 2-1.